The following is a 325-amino-acid chain: Serine/threonine-protein kinase CtkA (325 aa).

Residues 21–24 (NGNK), Lys-37, Gln-72, and 88–90 (KDF) contribute to the ATP site. Mg(2+) contacts are provided by Asn-160 and Asp-179. An ATP-binding site is contributed by Asp-179. Residues 296–325 (QHKQAHSNPYDNADDLDNSNEYTPTPKRRR) are disordered.

Autophosphorylates on either Thr-3 or Thr-7.

It is found in the secreted. The protein resides in the host cytoplasm. It localises to the host cytosol. The protein localises to the host nucleus. It catalyses the reaction L-seryl-[protein] + ATP = O-phospho-L-seryl-[protein] + ADP + H(+). The catalysed reaction is L-threonyl-[protein] + ATP = O-phospho-L-threonyl-[protein] + ADP + H(+). In terms of biological role, virulence factor acting as a pro-inflammatory protein that induces the secretion of the pro-inflammatory cytokines TNF-alpha (tumor necrosis factor-alpha) and IL-8 (interleukin-8) from human macrophages, as well as enhanced translocation of the transcription factor NF-kappa-B complex in macrophages. Is a kinase capable of autophosphorylating itself at a threonine residue near the N-terminus. Also leads to enhanced phosphorylation of the NF-kappa-B p65 subunit (RELA) at 'Ser-276' in human epithelial cancer cells; its kinase activity is required for this enhanced phosphorylation that up-regulates NF-kappa-B activity, but it does not directly phosphorylate this protein. Thus, the kinase activity of CtkA may play an important role in the induction of host inflammatory responses during H.pylori infection. This chain is Serine/threonine-protein kinase CtkA (ctkA), found in Helicobacter pylori (strain J99 / ATCC 700824) (Campylobacter pylori J99).